Here is a 317-residue protein sequence, read N- to C-terminus: Ribosomal RNA small subunit methyltransferase H (317 aa).

S-adenosyl-L-methionine contacts are provided by residues 39–41, aspartate 59, phenylalanine 83, aspartate 104, and glutamine 111; that span reads GGH.

Belongs to the methyltransferase superfamily. RsmH family.

It is found in the cytoplasm. It carries out the reaction cytidine(1402) in 16S rRNA + S-adenosyl-L-methionine = N(4)-methylcytidine(1402) in 16S rRNA + S-adenosyl-L-homocysteine + H(+). Its function is as follows. Specifically methylates the N4 position of cytidine in position 1402 (C1402) of 16S rRNA. This chain is Ribosomal RNA small subunit methyltransferase H, found in Paraburkholderia xenovorans (strain LB400).